The sequence spans 185 residues: Peptidyl-tRNA hydrolase (185 aa).

Tyr14 lines the tRNA pocket. Catalysis depends on His19, which acts as the Proton acceptor. TRNA contacts are provided by Phe64, Asn66, and Asn112.

It belongs to the PTH family. Monomer.

It is found in the cytoplasm. The enzyme catalyses an N-acyl-L-alpha-aminoacyl-tRNA + H2O = an N-acyl-L-amino acid + a tRNA + H(+). Its function is as follows. Hydrolyzes ribosome-free peptidyl-tRNAs (with 1 or more amino acids incorporated), which drop off the ribosome during protein synthesis, or as a result of ribosome stalling. In terms of biological role, catalyzes the release of premature peptidyl moieties from peptidyl-tRNA molecules trapped in stalled 50S ribosomal subunits, and thus maintains levels of free tRNAs and 50S ribosomes. The polypeptide is Peptidyl-tRNA hydrolase (Alkaliphilus metalliredigens (strain QYMF)).